Here is a 461-residue protein sequence, read N- to C-terminus: Calcitonin gene-related peptide type 1 receptor (461 aa).

An N-terminal signal peptide occupies residues 1–22 (MEKKCTLYFLVLLPFFMILVTA). At 23–139 (ELEESPEDSI…NTHEKVKTAL (117 aa)) the chain is on the extracellular side. Cystine bridges form between Cys48–Cys74, Cys65–Cys105, and Cys88–Cys127. 3 N-linked (GlcNAc...) asparagine glycosylation sites follow: Asn66, Asn118, and Asn123. Residues 140–164 (NLFYLTIIGHGLSIASLLISLGIFF) form a helical membrane-spanning segment. The Cytoplasmic segment spans residues 165-175 (YFKSLSCQRIT). A helical membrane pass occupies residues 176-198 (LHKNLFFSFVCNSVVTIIHLTAV). Over 199–209 (ANNQALVATNP) the chain is Extracellular. The helical transmembrane segment at 210 to 238 (VSCKVSQFIHLYLMGCNYFWMLCEGIYLH) threads the bilayer. Residues 239 to 252 (TLIVVAVFAEKQHL) are Cytoplasmic-facing. Residues 253–273 (MWYYFLGWGFPLIPACIHAIA) form a helical membrane-spanning segment. At 274 to 289 (RSLYYNDNCWISSDTH) the chain is on the extracellular side. A required for RAMP3 interaction region spans residues 288–289 (TH). A helical membrane pass occupies residues 290–314 (LLYIIHGPICAALLVNLFFLLNIVR). Residues 315–329 (VLITKLKVTHQAESN) are Cytoplasmic-facing. Residues 330-351 (LYMKAVRATLILVPLLGIEFVL) form a helical membrane-spanning segment. The Extracellular segment spans residues 352–366 (IPWRPEGKIAEEVYD). The helical transmembrane segment at 367 to 387 (YIMHILMHFQGLLVSTIFCFF) threads the bilayer. Phosphoserine occurs at positions 420 and 445.

The protein belongs to the G-protein coupled receptor 2 family. In terms of assembly, heterodimer of CALCRL and RAMP1; the receptor complex functions as CGRP receptor. Heterodimer of CALCRL and RAMP2 or CALCRL and RAMP3; the complexes function as adrenomedullin receptor. In terms of tissue distribution, predominantly expressed in the lung and heart.

Its subcellular location is the cell membrane. Functionally, g protein-coupled receptor which specificity is determined by its interaction with receptor-activity-modifying proteins (RAMPs). Together with RAMP1, form the receptor complex for calcitonin-gene-related peptides CALCA/CGRP1 and CALCB/CGRP2. Together with RAMP2 or RAMP3, function as receptor complexes for adrenomedullin (ADM and ADM2). Ligand binding causes a conformation change that triggers signaling via guanine nucleotide-binding proteins (G proteins) and modulates the activity of downstream effectors. Activates cAMP-dependent pathway. This chain is Calcitonin gene-related peptide type 1 receptor, found in Homo sapiens (Human).